A 455-amino-acid polypeptide reads, in one-letter code: Lysine histidine transporter-like 4 (455 aa).

Residues 1–38 (MAGIPDHIQDQHLVEEDQPFDLEDWLPITASRNANWYY) lie on the Cytoplasmic side of the membrane. The chain crosses the membrane as a helical span at residues 39–59 (SAFHNVTAIVGAGVLGLPYAM). The Extracellular portion of the chain corresponds to 60–61 (SE). Residues 62-82 (LGWGPGVVVLILSWVITLYTL) form a helical membrane-spanning segment. The Cytoplasmic portion of the chain corresponds to 83-113 (WQMIEMHEMFEGQRFDRYHELGQAAFGKKLG). The helical transmembrane segment at 114 to 134 (LYIIVPLQLLVEISVCIVYMV) threads the bilayer. Residues 135 to 158 (TGGKSLKNVHDLALGDGDKCTKLR) lie on the Extracellular side of the membrane. The helical transmembrane segment at 159–179 (IQHFILIFASSQFVLSLLKNF) threads the bilayer. Residues 180 to 181 (NS) lie on the Cytoplasmic side of the membrane. A helical membrane pass occupies residues 182–202 (ISGVSLVAAVMSVSYSTIAWV). At 203–226 (ASLRKGATTGSVEYGYRKRTTSVP) the chain is on the extracellular side. A helical transmembrane segment spans residues 227 to 247 (LAFLSALGEMAFAYAGHNVVL). The Cytoplasmic segment spans residues 248–267 (EIQATIPSTPENPSKRPMWK). The helical transmembrane segment at 268–288 (GAVVAYIIVAFCYFPVALVGF) threads the bilayer. Residues 289–307 (KTFGNSVEESILESLTKPT) are Extracellular-facing. The helical transmembrane segment at 308-328 (ALVIVANMFVVIHLLGSYQVY) threads the bilayer. The Cytoplasmic portion of the chain corresponds to 329 to 357 (AMPVFDMIESVMIRIWHFSPTRVLRFTIR). The chain crosses the membrane as a helical span at residues 358 to 378 (WTFVAATMGIAVGLPYYSALL). Position 379 (S379) is a topological domain, extracellular. A helical transmembrane segment spans residues 380–400 (FFGGFVFAPTTYFIPCIMWLI). The Cytoplasmic portion of the chain corresponds to 401-412 (LKKPKRFSLSWC). The helical transmembrane segment at 413-433 (MNWFCIIFGLVLMIIAPIGGL) threads the bilayer. At 434 to 455 (AKLIYNIQKGTLPNSRCNLPKH) the chain is on the extracellular side.

Belongs to the amino acid/polyamine transporter 2 family. Amino acid/auxin permease (AAAP) (TC 2.A.18.2) subfamily.

It is found in the cell membrane. Its function is as follows. Amino acid transporter. This is Lysine histidine transporter-like 4 from Arabidopsis thaliana (Mouse-ear cress).